Consider the following 286-residue polypeptide: ATP synthase gamma chain (286 aa).

This sequence belongs to the ATPase gamma chain family. F-type ATPases have 2 components, CF(1) - the catalytic core - and CF(0) - the membrane proton channel. CF(1) has five subunits: alpha(3), beta(3), gamma(1), delta(1), epsilon(1). CF(0) has three main subunits: a, b and c.

It localises to the cell membrane. In terms of biological role, produces ATP from ADP in the presence of a proton gradient across the membrane. The gamma chain is believed to be important in regulating ATPase activity and the flow of protons through the CF(0) complex. The sequence is that of ATP synthase gamma chain from Ruminococcus albus (strain ATCC 27210 / DSM 20455 / JCM 14654 / NCDO 2250 / 7).